Reading from the N-terminus, the 311-residue chain is p-hydroxybenzoic acid efflux pump subunit AaeA (311 aa).

A helical membrane pass occupies residues 11–31 (VGITVLVVVLAVIAIFNVWAF).

This sequence belongs to the membrane fusion protein (MFP) (TC 8.A.1) family.

The protein localises to the cell inner membrane. Functionally, forms an efflux pump with AaeB. This is p-hydroxybenzoic acid efflux pump subunit AaeA from Yersinia pseudotuberculosis serotype O:3 (strain YPIII).